Consider the following 419-residue polypeptide: MEKERETLQVWKQRVGQELDSVIAFWMEHSHDQEHGGFFTCLGRDGQVYDHLKYVWLQGRQVWMYCRLYRTFERFRRVELLDAAKAGGEFLLSYARVAPPGKKCAFVLTQDGRPVKVQRTIFSECFYTMAMNELWKVTGEMHYQREAVEMMDQIIHWVREDPAGLGRPQLSGTLATEPMAVPMMLLNLVEQLGEEDEEMTDKYAELGDWCAHRILQHVQRDGQVVLENVSEDGKELPGCLGRHQNPGHTLEAGWFLLQYALRKGDPKLQRHIIDKFLLLPFHSGWDPEHGGLFYFQDADDLCPTQLEWNMKLWWPHTEAMIAFLMGYRDSGDPALLNLFYQVAEYTFHQFRDPEYGEWFGYLNQEGKVALTIKGGPFKGCFHVPRCLAMCEQILGALLQRLGPAPLGSLPAVPTREGSK.

The leucine-zipper stretch occupies residues 185 to 206; sequence LLNLVEQLGEEDEEMTDKYAEL. Ser-418 is modified (phosphoserine).

This sequence belongs to the N-acylglucosamine 2-epimerase family. In terms of assembly, homodimer. Forms a heterodimer with renin and inhibits its activity. In terms of tissue distribution, kidney, adrenal gland, brain, lung, spleen, ovary, testis and heart.

It carries out the reaction an N-acyl-D-glucosamine = an N-acyl-D-mannosamine. It participates in amino-sugar metabolism; N-acetylneuraminate degradation. Its function is as follows. Catalyzes the interconversion of N-acetylglucosamine to N-acetylmannosamine. Involved in the N-glycolylneuraminic acid (Neu5Gc) degradation pathway. This is N-acylglucosamine 2-epimerase (Renbp) from Rattus norvegicus (Rat).